Consider the following 96-residue polypeptide: Muconolactone Delta-isomerase (96 aa).

It belongs to the muconolactone Delta-isomerase family. As to quaternary structure, homodecamer.

It carries out the reaction (S)-muconolactone = (4,5-dihydro-5-oxofuran-2-yl)-acetate. The protein operates within aromatic compound metabolism; beta-ketoadipate pathway; 5-oxo-4,5-dihydro-2-furylacetate from catechol: step 3/3. This is Muconolactone Delta-isomerase (catC) from Pseudomonas putida (Arthrobacter siderocapsulatus).